A 569-amino-acid polypeptide reads, in one-letter code: Phenylalanine ammonia-lyase (569 aa).

Y78 serves as the catalytic Proton donor/acceptor. The segment at residues 167–169 (ASG) is a cross-link (5-imidazolinone (Ala-Gly)). A 2,3-didehydroalanine (Ser) modification is found at S168. Residues N223, Q311, R317, N347, K419, E448, and N451 each coordinate (E)-cinnamate.

The protein belongs to the PAL/histidase family. In terms of assembly, homotetramer. Post-translationally, contains an active site 4-methylidene-imidazol-5-one (MIO), which is formed autocatalytically by cyclization and dehydration of residues Ala-Ser-Gly.

It is found in the cytoplasm. It carries out the reaction L-phenylalanine = (E)-cinnamate + NH4(+). It functions in the pathway phenylpropanoid metabolism; trans-cinnamate biosynthesis; trans-cinnamate from L-phenylalanine: step 1/1. Functionally, catalyzes the non-oxidative deamination of L-phenylalanine to form trans-cinnamic acid, the first step in the phenylpropanoid pathway. The polypeptide is Phenylalanine ammonia-lyase (Nostoc punctiforme (strain ATCC 29133 / PCC 73102)).